A 388-amino-acid chain; its full sequence is Na(+)/H(+) antiporter NhaA (388 aa).

The next 11 helical transmembrane spans lie at glycine 14 to threonine 34, methionine 59 to valine 79, alanine 95 to phenylalanine 115, glycine 125 to glycine 145, isoleucine 154 to phenylalanine 174, leucine 179 to leucine 199, valine 219 to leucine 239, valine 254 to valine 274, isoleucine 292 to leucine 312, isoleucine 328 to leucine 348, and tryptophan 360 to leucine 380.

The protein belongs to the NhaA Na(+)/H(+) (TC 2.A.33) antiporter family.

It localises to the cell inner membrane. It catalyses the reaction Na(+)(in) + 2 H(+)(out) = Na(+)(out) + 2 H(+)(in). In terms of biological role, na(+)/H(+) antiporter that extrudes sodium in exchange for external protons. In Salmonella paratyphi A (strain ATCC 9150 / SARB42), this protein is Na(+)/H(+) antiporter NhaA.